We begin with the raw amino-acid sequence, 288 residues long: ATP synthase subunit a (288 aa).

The next 6 helical transmembrane spans lie at 47 to 67, 104 to 124, 157 to 177, 199 to 219, 237 to 257, and 258 to 278; these read LDSM…FWMV, LIAP…LMDL, DPNI…FYSI, PIVQ…TLIA, LIFI…SVPW, and AIFH…LTIV.

It belongs to the ATPase A chain family. F-type ATPases have 2 components, CF(1) - the catalytic core - and CF(0) - the membrane proton channel. CF(1) has five subunits: alpha(3), beta(3), gamma(1), delta(1), epsilon(1). CF(0) has three main subunits: a(1), b(2) and c(9-12). The alpha and beta chains form an alternating ring which encloses part of the gamma chain. CF(1) is attached to CF(0) by a central stalk formed by the gamma and epsilon chains, while a peripheral stalk is formed by the delta and b chains.

The protein localises to the cell inner membrane. Key component of the proton channel; it plays a direct role in the translocation of protons across the membrane. The sequence is that of ATP synthase subunit a from Psychrobacter arcticus (strain DSM 17307 / VKM B-2377 / 273-4).